The following is a 365-amino-acid chain: Synapse-associated protein 1 (365 aa).

Residues 1-65 are disordered; it reads MFGGLSSWLG…QPPTEDPQFL (65 aa). The span at 52–62 shows a compositional bias: low complexity; the sequence is EQQQQPPTEDP. The BSD domain maps to 172-224; sequence VQFNFDFDQMYPVALVMLQEDELLSKMRFALVPKLVKEEVFWRNYFYRISLIK. The disordered stretch occupies residues 237–259; sequence QASGKEEKSSNRDDNLPLTEAVR. Residues 240 to 251 are compositionally biased toward basic and acidic residues; that stretch reads GKEEKSSNRDDN. At threonine 262 the chain carries Phosphothreonine. Phosphoserine is present on residues serine 283, serine 298, and serine 327. Residues 344–365 form a disordered region; the sequence is VAESEKRDENWDKEIEKMLQES. Residues 346 to 365 are compositionally biased toward basic and acidic residues; the sequence is ESEKRDENWDKEIEKMLQES.

Interacts (via phosphorylated form and BSD domain) with AKT1; this interaction is enhanced in a mTORC2-mediated manner in response to epidermal growth factor (EGF) stimulation and activates AKT1. Phosphorylated. Phosphorylation increases in a mTORC2-mediated manner in response to epidermal growth factor (EGF) stimulation. As to expression, expressed in the liver, kidney, skeletal muscle and in white and brown adipose tissues. Expressed in the cortex, cerebellum, thalamus, hippocampus, braistem, olfactory bulb, spinal cord and striatum of the brain. Expressed in most neuropil regions containing glutamatergic synaptic terminals. Expressed in the CA1, CA2 and CA3 perikarya of the hippocampus. Expressed in neurons and Purkinje cells (at the protein level).

Its subcellular location is the cytoplasm. The protein localises to the perinuclear region. It localises to the golgi apparatus. It is found in the perikaryon. The protein resides in the cell projection. Its subcellular location is the axon. The protein localises to the dendrite. It localises to the growth cone. It is found in the presynaptic cell membrane. The protein resides in the postsynaptic cell membrane. Its subcellular location is the membrane. Plays a role in adipocyte differentiation by promoting mTORC2-mediated phosphorylation of AKT1 at 'Ser-473' after growth factor stimulation. This is Synapse-associated protein 1 from Mus musculus (Mouse).